The primary structure comprises 138 residues: Acidic phospholipase A2 BE-I-PLA2 (138 aa).

An N-terminal signal peptide occupies residues 1–16; the sequence is MRTLWIMAVLLVGVEG. Intrachain disulfides connect C42/C131, C44/C60, C59/C111, C65/C138, C66/C104, C73/C97, and C91/C102. Positions 43, 45, and 47 each coordinate Ca(2+). H63 is an active-site residue. D64 contacts Ca(2+). The active site involves D105.

The protein belongs to the phospholipase A2 family. Group II subfamily. D49 sub-subfamily. Requires Ca(2+) as cofactor. As to expression, expressed by the venom gland.

It localises to the secreted. It catalyses the reaction a 1,2-diacyl-sn-glycero-3-phosphocholine + H2O = a 1-acyl-sn-glycero-3-phosphocholine + a fatty acid + H(+). In terms of biological role, snake venom phospholipase A2 that shows a potent inhibition of human platelet aggregation. This inhibition is concentration-dependent when aggregation is induced by collagen, and concentration-independent when aggregation is induced by arachidonic acid. In human umbilical-cord vein endothelial cells, this toxin stimulates endothelial cells to release prostaglandin I(2), suggesting an increase of its potential anti-platelet activity in vivo. PLA2 catalyzes the calcium-dependent hydrolysis of the 2-acyl groups in 3-sn-phosphoglycerides. This chain is Acidic phospholipase A2 BE-I-PLA2, found in Bothrops erythromelas (Caatinga lance head).